Consider the following 185-residue polypeptide: Large ribosomal subunit protein uL5 (185 aa).

Belongs to the universal ribosomal protein uL5 family. In terms of assembly, part of the 50S ribosomal subunit; part of the 5S rRNA/L5/L18/L25 subcomplex. Contacts the 5S rRNA and the P site tRNA. Forms a bridge to the 30S subunit in the 70S ribosome.

This is one of the proteins that bind and probably mediate the attachment of the 5S RNA into the large ribosomal subunit, where it forms part of the central protuberance. In the 70S ribosome it contacts protein S13 of the 30S subunit (bridge B1b), connecting the 2 subunits; this bridge is implicated in subunit movement. Contacts the P site tRNA; the 5S rRNA and some of its associated proteins might help stabilize positioning of ribosome-bound tRNAs. The chain is Large ribosomal subunit protein uL5 from Caulobacter sp. (strain K31).